Reading from the N-terminus, the 740-residue chain is Catalase-peroxidase (740 aa).

The segment at residues 107–229 (WHAAGTYRIH…LAAVQMGLIY (123 aa)) is a cross-link (tryptophyl-tyrosyl-methioninium (Trp-Tyr) (with M-255)). H108 (proton acceptor) is an active-site residue. Residues 229–255 (YVNPEGPNGNPDPMAAAVDIRETFRRM) constitute a cross-link (tryptophyl-tyrosyl-methioninium (Tyr-Met) (with W-107)). A heme b-binding site is contributed by H270. Catalysis depends on W321, which acts as the Tryptophan radical intermediate.

The protein belongs to the peroxidase family. Peroxidase/catalase subfamily. In terms of assembly, homodimer. Heme b serves as cofactor. In terms of processing, formation of the three residue Trp-Tyr-Met cross-link is important for the catalase, but not the peroxidase activity of the enzyme.

It catalyses the reaction H2O2 + AH2 = A + 2 H2O. The enzyme catalyses 2 H2O2 = O2 + 2 H2O. Bifunctional enzyme with both catalase and broad-spectrum peroxidase activity, oxidizing various electron donors including NADP(H). Protects M.tuberculosis against toxic reactive oxygen species (ROS) including hydrogen peroxide as well as organic peroxides and thus contributes to its survival within host macrophages by countering the phagocyte oxidative burst. Also displays efficient peroxynitritase activity, which may help the bacterium to persist in macrophages. In terms of biological role, catalyzes the oxidative activation of the antitubercular pro-drug isoniazid (INH) to generate an isonicotinoyl radical that then reacts nonenzymatically with NAD to form an isonicotinoyl-NAD adduct which inhibits InhA. The polypeptide is Catalase-peroxidase (Mycobacterium tuberculosis (strain CDC 1551 / Oshkosh)).